The sequence spans 245 residues: Orotidine 5'-phosphate decarboxylase (245 aa).

Substrate is bound by residues aspartate 22, lysine 44, 71-80 (DLKFHDIPNT), threonine 131, arginine 192, glutamine 201, glycine 221, and arginine 222. Catalysis depends on lysine 73, which acts as the Proton donor.

This sequence belongs to the OMP decarboxylase family. Type 1 subfamily. In terms of assembly, homodimer.

The catalysed reaction is orotidine 5'-phosphate + H(+) = UMP + CO2. The protein operates within pyrimidine metabolism; UMP biosynthesis via de novo pathway; UMP from orotate: step 2/2. Catalyzes the decarboxylation of orotidine 5'-monophosphate (OMP) to uridine 5'-monophosphate (UMP). The polypeptide is Orotidine 5'-phosphate decarboxylase (Salmonella typhimurium (strain LT2 / SGSC1412 / ATCC 700720)).